The primary structure comprises 715 residues: ATP-dependent zinc metalloprotease YME1L1 (715 aa).

The interval 31–54 is disordered; that stretch reads VSVNTSASPKQHRDTVAEHEAPSS. Residues 41–52 show a composition bias toward basic and acidic residues; the sequence is QHRDTVAEHEAP. The chain crosses the membrane as a helical span at residues 238–258; it reads ILFVLLLFGIYGLLKNPFLSV. The ATP site is built by Val-283, Thr-325, Gly-326, Lys-327, Thr-328, and Leu-329. His-541 serves as a coordination point for Zn(2+). Residue Glu-542 is part of the active site. Zn(2+) contacts are provided by His-545 and Asp-619.

The protein in the N-terminal section; belongs to the AAA ATPase family. In the C-terminal section; belongs to the peptidase M41 family. In terms of assembly, homohexamer; may also form heterohexamers. Exists in several complexes of 600-1100 kDa. Interacts with AFG1L. The cofactor is Zn(2+). Post-translationally, proteolytically processed by mitochondrial processing peptidase (MPP) to generate the mature form. Degraded in an OMA1-dependent manner in response to oxidative stress.

The protein localises to the mitochondrion inner membrane. The protein resides in the mitochondrion. It carries out the reaction ATP + H2O = ADP + phosphate + H(+). Its function is as follows. ATP-dependent metalloprotease that catalyzes the degradation of folded and unfolded proteins with a suitable degron sequence in the mitochondrial intermembrane region. Plays an important role in regulating mitochondrial morphology and function by cleaving OPA1 at position S2, giving rise to a form of OPA1 that promotes maintenance of normal mitochondrial structure and mitochondrial protein metabolism. Ensures cell proliferation, maintains normal cristae morphology and complex I respiration activity, promotes antiapoptotic activity and protects mitochondria from the accumulation of oxidatively damaged membrane proteins. Required to control the accumulation of nonassembled respiratory chain subunits (NDUFB6, OX4 and ND1). Involved in the mitochondrial adaptation in response to various signals, such as stress or developmental cues, by mediating degradation of mitochondrial proteins to rewire the mitochondrial proteome. Catalyzes degradation of mitochondrial proteins, such as translocases, lipid transfer proteins and metabolic enzymes in response to nutrient starvation in order to limit mitochondrial biogenesis: mechanistically, YME1L is activated by decreased phosphatidylethanolamine levels caused by LPIN1 activity in response to mTORC1 inhibition. Acts as a regulator of adult neural stem cell self-renewal by promoting mitochondrial proteome rewiring, preserving neural stem and progenitor cells self-renewal. Required for normal, constitutive degradation of PRELID1. Catalyzes the degradation of OMA1 in response to membrane depolarization. Mediates degradation of TIMM17A downstream of the integrated stress response (ISR). Catalyzes degradation of MICU1 when MICU1 is not assembled via an interchain disulfide. The sequence is that of ATP-dependent zinc metalloprotease YME1L1 (Yme1l1) from Rattus norvegicus (Rat).